Reading from the N-terminus, the 748-residue chain is MTTIKTSNLGFPRLGRKREWKKAIENYWAHKIDKAELDQTLTDLHKENLLLQKNYHLDSIPVGDFSLYDHILDTSLLFNIIPERFQGREVNDDLLFDIARGNKEHVASALIKWFNTNYHYIVPEWDNVEPKVEKNTLLERFKYAQSINVNAHPVIVGPITFVKLSKGGHQSFEEKVETLLPLYKEVLQSLVDAGAEYIQIDEPILVTDDSESYEDITRKAYDYFANEGLGKYLVIQTYFERVHLKFLSSLPVGGLGLDLVHDNGYNLKQIEDGDFDQSKALYAGIIDGRNVWAADIEAKKQLIETLQQHTQQLVIQPSSSLLHVPVSLDDETLDESIAEGLSFATEKLDELDALRRLFNDNDLSKYEHYKARYERFQSQSFKNLEYDFESVPTHRKSPFAKRKQLQNQRLNLPDLPTTTIGSFPQTREIRKFRADWKNNRITDAEYQEFLQNEIARWIKIQEDIGLDVLVHGEFERNDMVEFFGEKLQGFLVTKFGWVQSYGSRAVKPPVIYGDVKWTAPLTVKETVYAQSLTDKPVKGMLTGPVTILNWSFERVDVPRKVVQDQIALAIDEEVLALEEAGIKVIQVDEPALREGLPLRSEYHEQYLEDAVHSFKLATSSVHDETQIHTHMCYSQFGQIIHAIHDLDADVISIETSRSHGDLIQDFEDINYDLGIGLGVYDIHSPRIPTEEEITTAINRSLQQIDRSLFWVNPDCGLKTRKENEVKDALTVLVNAVKKKRQESESTTA.

Residues 18-21 and K112 contribute to the 5-methyltetrahydropteroyltri-L-glutamate site; that span reads REWK. L-homocysteine is bound by residues 420–422 and E473; that span reads IGS. L-methionine-binding positions include 420 to 422 and E473; that span reads IGS. W550 lines the 5-methyltetrahydropteroyltri-L-glutamate pocket. An L-homocysteine-binding site is contributed by D588. D588 provides a ligand contact to L-methionine. E594 serves as a coordination point for 5-methyltetrahydropteroyltri-L-glutamate. Residues H630, C632, and E654 each contribute to the Zn(2+) site. H683 serves as the catalytic Proton donor. Residue C715 coordinates Zn(2+).

This sequence belongs to the vitamin-B12 independent methionine synthase family. Zn(2+) serves as cofactor.

The enzyme catalyses 5-methyltetrahydropteroyltri-L-glutamate + L-homocysteine = tetrahydropteroyltri-L-glutamate + L-methionine. It participates in amino-acid biosynthesis; L-methionine biosynthesis via de novo pathway; L-methionine from L-homocysteine (MetE route): step 1/1. Its function is as follows. Catalyzes the transfer of a methyl group from 5-methyltetrahydrofolate to homocysteine resulting in methionine formation. In Staphylococcus epidermidis (strain ATCC 35984 / DSM 28319 / BCRC 17069 / CCUG 31568 / BM 3577 / RP62A), this protein is 5-methyltetrahydropteroyltriglutamate--homocysteine methyltransferase.